The sequence spans 154 residues: uncharacterized protein (154 aa).

2 helical membrane passes run L19–L39 and A51–A71.

The protein localises to the cell membrane. This is an uncharacterized protein from Mycobacterium tuberculosis (strain CDC 1551 / Oshkosh).